The following is a 160-amino-acid chain: Sperm acrosome-associated protein 5 (160 aa).

The first 21 residues, 1–21 (MKVCSIVVVILAVLLIAKLDA), serve as a signal peptide directing secretion. The 129-residue stretch at 22–150 (KIYERCELAK…SEWLKGCSVR (129 aa)) folds into the C-type lysozyme domain. Disulfide bonds link C27/C147, C51/C135, C85/C100, and C96/C114. The active site involves E56.

The protein belongs to the glycosyl hydrolase 22 family.

The protein resides in the secreted. The enzyme catalyses Hydrolysis of (1-&gt;4)-beta-linkages between N-acetylmuramic acid and N-acetyl-D-glucosamine residues in a peptidoglycan and between N-acetyl-D-glucosamine residues in chitodextrins.. The sequence is that of Sperm acrosome-associated protein 5 (Spaca5) from Mus musculus (Mouse).